The primary structure comprises 154 residues: Putative thioredoxin H10 (154 aa).

The Thioredoxin domain occupies 24 to 148 (NNNNSYGQTR…LQKKTAAAAD (125 aa)). Active-site nucleophile residues include C74 and C77. Cysteines 74 and 77 form a disulfide.

It belongs to the thioredoxin family.

The protein localises to the cytoplasm. Functionally, probable thiol-disulfide oxidoreductase that may be involved in the redox regulation of a number of cytosolic enzymes. This Arabidopsis thaliana (Mouse-ear cress) protein is Putative thioredoxin H10.